Consider the following 137-residue polypeptide: ATP synthase epsilon chain, chloroplastic (137 aa).

It belongs to the ATPase epsilon chain family. In terms of assembly, F-type ATPases have 2 components, CF(1) - the catalytic core - and CF(0) - the membrane proton channel. CF(1) has five subunits: alpha(3), beta(3), gamma(1), delta(1), epsilon(1). CF(0) has three main subunits: a, b and c.

It is found in the plastid. The protein resides in the chloroplast thylakoid membrane. Produces ATP from ADP in the presence of a proton gradient across the membrane. The sequence is that of ATP synthase epsilon chain, chloroplastic from Hordeum vulgare (Barley).